We begin with the raw amino-acid sequence, 236 residues long: uncharacterized protein (236 aa).

Residues 52-72 (FFPYIALFQIIMLIILLILYF) form a helical membrane-spanning segment. Residues 183–236 (SDKREHDDEELSFTTEMETITTETETSSTIPHLRSLPIKSESSMETTSEETDEE) are disordered. The segment covering 196–212 (TTEMETITTETETSSTI) has biased composition (low complexity).

It localises to the membrane. This is an uncharacterized protein from Acheta domesticus (House cricket).